The primary structure comprises 194 residues: Chromophore lyase CpcT/CpeT 1 (194 aa).

It belongs to the CpcT/CpeT biliprotein lyase family.

Covalently attaches a chromophore to Cys residue(s) of phycobiliproteins. In Microcystis aeruginosa (strain NIES-843 / IAM M-2473), this protein is Chromophore lyase CpcT/CpeT 1.